The primary structure comprises 216 residues: Protein Syd (216 aa).

It belongs to the Syd family.

The protein localises to the cell inner membrane. Functionally, interacts with the SecY protein in vivo. May bind preferentially to an uncomplexed state of SecY, thus functioning either as a chelating agent for excess SecY in the cell or as a regulatory factor that negatively controls the translocase function. The chain is Protein Syd from Shewanella putrefaciens (strain CN-32 / ATCC BAA-453).